A 1930-amino-acid polypeptide reads, in one-letter code: Transport and Golgi organization protein 1 homolog (1930 aa).

A signal peptide spans 1-24 (MAAAPGLLFWLFVLGALWWVPGQS). Residues 25-1171 (DLSHGRRFSD…EPAAVPPLES (1147 aa)) are Lumenal-facing. Residues 45-107 (MLMYRGKALE…PKDLIKVLHK (63 aa)) form the SH3 domain. Disordered regions lie at residues 144–263 (LELE…REKT), 317–496 (EEEE…AAEK), 547–737 (LGSS…MNSQ), 754–891 (TKQP…TPEI), and 1018–1149 (TAPL…PVGA). Residues 152–189 (EESKKAEEVSQHREKSPEESRGRELDPVPEPEAFRADS) are compositionally biased toward basic and acidic residues. Positions 197 to 211 (SESTEGLQGQPSAQE) are enriched in polar residues. Position 229 is a phosphoserine (Ser229). Residues 247–256 (ESRTGNSSPA) are compositionally biased toward polar residues. Positions 317-330 (EEEEEVEEDADSSD) are enriched in acidic residues. The segment covering 338 to 368 (SDKDEKVPGKPMIEKYLTDKDPNLSEEDKVE) has biased composition (basic and acidic residues). N-linked (GlcNAc...) asparagine glycosylation occurs at Asn360. Residues 420–430 (DSEDEGDDLFV) show a composition bias toward acidic residues. Basic and acidic residues-rich tracts occupy residues 431 to 442 (EEPKTNDVKDSE) and 451 to 461 (GEEKDIQESRK). A glycan (N-linked (GlcNAc...) asparagine) is linked at Asn631. Over residues 661–677 (EDGTDAEQARAIRRPQE) the composition is skewed to basic and acidic residues. Over residues 692-701 (DEEEEEEEGD) the composition is skewed to acidic residues. A compositionally biased stretch (polar residues) spans 715–726 (VSAQQSRENSPS). Basic and acidic residues predominate over residues 791 to 800 (EESHLADMRA). Ser856 is modified (phosphoserine). The segment covering 1030-1039 (GWARPGEERQ) has biased composition (basic and acidic residues). Polar residues-rich tracts occupy residues 1040–1054 (PPQQ…TGDL) and 1115–1127 (QPVT…SEVS). A compositionally biased stretch (basic and acidic residues) spans 1128 to 1137 (QKPDTKKDID). An intramembrane segment occupies 1172–1192 (AFGSLYAFILYLSKMLLATLP). Residues 1193-1202 (DNVQPGPDFY) lie on the Lumenal side of the membrane. The helical transmembrane segment at 1203-1223 (GLPWQPVIITAVLGIVSFAIF) threads the bilayer. Residues 1224–1930 (SWRTILVVKS…DRSQASKPTP (707 aa)) are Cytoplasmic-facing. Coiled-coil stretches lie at residues 1236-1329 (YQVT…KNQD) and 1359-1422 (LNEA…EIAL). A mediates interaction with MIA2 region spans residues 1238 to 1677 (VTEKQISEKL…VIVKPMPGRP (440 aa)). The segment at 1447–1472 (ESEDPDKGGNESDDLANGETGGDRSE) is disordered. Ser1458 is subject to Phosphoserine. Residues 1514-1662 (NLEDQIKKLE…LLEMTQKMAM (149 aa)) adopt a coiled-coil conformation. Disordered stretches follow at residues 1669–1796 (IVKP…VPLM), 1801–1820 (PPPI…FGPR), and 1840–1930 (APGV…KPTP). Positions 1677-1694 (PNTQNPPRRGLLSQNGSF) are enriched in polar residues. Phosphoserine is present on residues Ser1693 and Ser1705. Positions 1706–1715 (PPLPAEPPGR) are enriched in pro residues. A compositionally biased stretch (basic and acidic residues) spans 1722–1738 (SRRDTPRSEFGSLDRHL). Phosphoserine is present on residues Ser1733, Ser1754, Ser1766, and Ser1770. The span at 1760-1773 (PVVNSSSRSSSPAK) shows a compositional bias: low complexity. The segment at 1776–1930 (DEGKVNMAPK…DRSQASKPTP (155 aa)) is proline-rich domain (PRD); mediates interaction with the COPII coat subunits SEC23A and SEC23B. Residues 1801-1811 (PPPIRYGPPPQ) show a composition bias toward pro residues. At Arg1805 the chain carries Asymmetric dimethylarginine. The interval 1809–1869 (PPQLCGGPFG…GHTPFRPPGS (61 aa)) is SEC16A-interacting region (SIR); required for its localization to endoplasmic reticulum exit sites and for its interaction with SEC16A. The span at 1846 to 1858 (GKRDLPLDPREFL) shows a compositional bias: basic and acidic residues. Positions 1881 to 1898 (RLPPPTHGPQEYPPPPPA) are enriched in pro residues. At Ser1915 the chain carries Phosphoserine. Residues 1915 to 1930 (SPSSVQDRSQASKPTP) show a composition bias toward polar residues.

This sequence belongs to the MIA/OTOR family. Tango1 subfamily. As to quaternary structure, interacts with MIA2. Interacts (via SH3 domain) with COL7A1. Interacts with the COPII coat subunits SEC23A, SEC23B and maybe SEC24C. May interact with APOB and MIA2. Interacts with SEC16A.

Its subcellular location is the endoplasmic reticulum membrane. Plays a role in the transport of cargos that are too large to fit into COPII-coated vesicles and require specific mechanisms to be incorporated into membrane-bound carriers and exported from the endoplasmic reticulum. This protein is required for collagen VII (COL7A1) secretion by loading COL7A1 into transport carriers. It may participate in cargo loading of COL7A1 at endoplasmic reticulum exit sites by binding to COPII coat subunits Sec23/24 and guiding SH3-bound COL7A1 into a growing carrier. Does not play a role in global protein secretion and is apparently specific to COL7A1 cargo loading. However, it may participate in secretion of other proteins in cells that do not secrete COL7A1. It is also specifically required for the secretion of lipoproteins by participating in their export from the endoplasmic reticulum. Required for correct assembly of COPII coat components at endoplasmic reticulum exit sites (ERES) and for the localization of SEC16A and membrane-bound ER-resident complexes consisting of MIA2 and PREB/SEC12 to ERES. The polypeptide is Transport and Golgi organization protein 1 homolog (Mus musculus (Mouse)).